Reading from the N-terminus, the 228-residue chain is Ribose-5-phosphate isomerase A (228 aa).

Substrate-binding positions include 29 to 32 (TGST), 85 to 88 (DGAD), and 98 to 101 (KGGG). Glutamate 107 serves as the catalytic Proton acceptor. Lysine 125 contacts substrate.

It belongs to the ribose 5-phosphate isomerase family. In terms of assembly, homodimer.

It catalyses the reaction aldehydo-D-ribose 5-phosphate = D-ribulose 5-phosphate. Its pathway is carbohydrate degradation; pentose phosphate pathway; D-ribose 5-phosphate from D-ribulose 5-phosphate (non-oxidative stage): step 1/1. Catalyzes the reversible conversion of ribose-5-phosphate to ribulose 5-phosphate. The chain is Ribose-5-phosphate isomerase A from Staphylococcus aureus (strain COL).